The primary structure comprises 391 residues: NAD(P)H-quinone oxidoreductase subunit H, chloroplastic (391 aa).

The protein belongs to the complex I 49 kDa subunit family. As to quaternary structure, NDH is composed of at least 16 different subunits, 5 of which are encoded in the nucleus.

It localises to the plastid. The protein resides in the chloroplast thylakoid membrane. The catalysed reaction is a plastoquinone + NADH + (n+1) H(+)(in) = a plastoquinol + NAD(+) + n H(+)(out). It carries out the reaction a plastoquinone + NADPH + (n+1) H(+)(in) = a plastoquinol + NADP(+) + n H(+)(out). NDH shuttles electrons from NAD(P)H:plastoquinone, via FMN and iron-sulfur (Fe-S) centers, to quinones in the photosynthetic chain and possibly in a chloroplast respiratory chain. The immediate electron acceptor for the enzyme in this species is believed to be plastoquinone. Couples the redox reaction to proton translocation, and thus conserves the redox energy in a proton gradient. The protein is NAD(P)H-quinone oxidoreductase subunit H, chloroplastic of Chaetosphaeridium globosum (Charophycean green alga).